The sequence spans 132 residues: C-X-C motif chemokine 5 (132 aa).

The N-terminal stretch at 1 to 40 (MSLQLRSSARIPSGSISPFMRMAPLAFLLLFTLPQHLAEA) is a signal peptide. Cystine bridges form between Cys53/Cys79 and Cys55/Cys95.

The protein belongs to the intercrine alpha (chemokine CxC) family. In terms of assembly, monomer. Homodimer. Post-translationally, GCP-2(1-78) and GCP-2(9-78) are produced by proteolytic cleavage after secretion from fibroblasts and epithelial cells. GCP-2(9-78) is the most prominent form. A number of additional N-terminal (processed between pos. 41 and 48) and C-terminal (processed between pos. 118 and 132) processed forms have been identified, probably also representing intermediate states.

Its subcellular location is the secreted. May participate in the recruitment of inflammatory cells by injured or infected tissue. GCP-2(1-78) and, more potent, GCP-2(9-78) attract neutrophils and are involved in neutrophil activation. This is C-X-C motif chemokine 5 (Cxcl5) from Mus musculus (Mouse).